Reading from the N-terminus, the 241-residue chain is Uridylate kinase (241 aa).

Lys-11–Gly-14 serves as a coordination point for ATP. The involved in allosteric activation by GTP stretch occupies residues Gly-19 to Gly-24. A UMP-binding site is contributed by Gly-53. Residues Gly-54 and Arg-58 each contribute to the ATP site. UMP-binding positions include Asp-74 and Thr-135–Thr-142. Positions 162, 168, and 171 each coordinate ATP.

This sequence belongs to the UMP kinase family. As to quaternary structure, homohexamer.

The protein localises to the cytoplasm. It catalyses the reaction UMP + ATP = UDP + ADP. It functions in the pathway pyrimidine metabolism; CTP biosynthesis via de novo pathway; UDP from UMP (UMPK route): step 1/1. With respect to regulation, allosterically activated by GTP. Inhibited by UTP. In terms of biological role, catalyzes the reversible phosphorylation of UMP to UDP. The polypeptide is Uridylate kinase (Wolinella succinogenes (strain ATCC 29543 / DSM 1740 / CCUG 13145 / JCM 31913 / LMG 7466 / NCTC 11488 / FDC 602W) (Vibrio succinogenes)).